Here is a 309-residue protein sequence, read N- to C-terminus: NAD kinase (309 aa).

The Proton acceptor role is filled by D89. NAD(+) contacts are provided by residues 89 to 90, 163 to 164, H174, R191, D193, and 204 to 209; these read DG, NE, and TAYSLS.

This sequence belongs to the NAD kinase family. The cofactor is a divalent metal cation.

The protein localises to the cytoplasm. The catalysed reaction is NAD(+) + ATP = ADP + NADP(+) + H(+). Functionally, involved in the regulation of the intracellular balance of NAD and NADP, and is a key enzyme in the biosynthesis of NADP. Catalyzes specifically the phosphorylation on 2'-hydroxyl of the adenosine moiety of NAD to yield NADP. This chain is NAD kinase, found in Shewanella frigidimarina (strain NCIMB 400).